We begin with the raw amino-acid sequence, 527 residues long: Type-2 serine--tRNA ligase (527 aa).

Alanine 317 contributes to the L-serine binding site. Cysteine 319 contributes to the Zn(2+) binding site. An L-serine-binding site is contributed by arginine 349. ATP-binding positions include 349–351 and 360–361; these read RWE and RV. An L-serine-binding site is contributed by 366–368; sequence RIE. 2 residues coordinate Zn(2+): glutamate 368 and cysteine 478. Arginine 485 is a binding site for ATP.

Belongs to the class-II aminoacyl-tRNA synthetase family. Type-2 seryl-tRNA synthetase subfamily. In terms of assembly, homodimer. It depends on Zn(2+) as a cofactor.

It localises to the cytoplasm. The enzyme catalyses tRNA(Ser) + L-serine + ATP = L-seryl-tRNA(Ser) + AMP + diphosphate + H(+). It carries out the reaction tRNA(Sec) + L-serine + ATP = L-seryl-tRNA(Sec) + AMP + diphosphate + H(+). The protein operates within aminoacyl-tRNA biosynthesis; selenocysteinyl-tRNA(Sec) biosynthesis; L-seryl-tRNA(Sec) from L-serine and tRNA(Sec): step 1/1. Functionally, catalyzes the attachment of serine to tRNA(Ser). Is also able to aminoacylate tRNA(Sec) with serine, to form the misacylated tRNA L-seryl-tRNA(Sec), which will be further converted into selenocysteinyl-tRNA(Sec). The polypeptide is Type-2 serine--tRNA ligase (Methanopyrus kandleri (strain AV19 / DSM 6324 / JCM 9639 / NBRC 100938)).